A 168-amino-acid polypeptide reads, in one-letter code: Pollen allergen Cro s 1 (168 aa).

The signal sequence occupies residues methionine 1–alanine 26. 3 disulfides stabilise this stretch: cysteine 38-cysteine 109, cysteine 41-cysteine 153, and cysteine 62-cysteine 97. A glycan (N-linked (GlcNAc...) asparagine) is linked at asparagine 64.

This sequence belongs to the Ole e I family. In terms of tissue distribution, expressed in pollen.

Its subcellular location is the secreted. This is Pollen allergen Cro s 1 from Crocus sativus (Saffron).